A 283-amino-acid chain; its full sequence is Thymidylate synthase (283 aa).

Position 22 (R22) interacts with dUMP. Residue C160 is the Nucleophile of the active site. DUMP is bound by residues R180–D183, N191, and H221–Y223. Residue D183 participates in (6R)-5,10-methylene-5,6,7,8-tetrahydrofolate binding. (6R)-5,10-methylene-5,6,7,8-tetrahydrofolate is bound at residue S282.

Belongs to the thymidylate synthase family. Bacterial-type ThyA subfamily. As to quaternary structure, homodimer.

Its subcellular location is the cytoplasm. The catalysed reaction is dUMP + (6R)-5,10-methylene-5,6,7,8-tetrahydrofolate = 7,8-dihydrofolate + dTMP. The protein operates within pyrimidine metabolism; dTTP biosynthesis. In terms of biological role, catalyzes the reductive methylation of 2'-deoxyuridine-5'-monophosphate (dUMP) to 2'-deoxythymidine-5'-monophosphate (dTMP) while utilizing 5,10-methylenetetrahydrofolate (mTHF) as the methyl donor and reductant in the reaction, yielding dihydrofolate (DHF) as a by-product. This enzymatic reaction provides an intracellular de novo source of dTMP, an essential precursor for DNA biosynthesis. The chain is Thymidylate synthase from Haemophilus influenzae (strain 86-028NP).